We begin with the raw amino-acid sequence, 169 residues long: Glycine-rich RNA-binding protein 10 (169 aa).

One can recognise an RRM domain in the interval 6–84; the sequence is YRCFVGGLAW…RTITVNEAQS (79 aa). Disordered stretches follow at residues 80–101 and 121–169; these read NEAQ…YGGR and GYGS…GGGW. The span at 85 to 101 shows a compositional bias: gly residues; it reads RGGGGGGGRGGGGYGGR.

In terms of tissue distribution, expressed only in roots and stems.

In terms of biological role, possibly has a role in RNA transcription or processing during stress. This chain is Glycine-rich RNA-binding protein 10 (GRP10), found in Brassica napus (Rape).